The primary structure comprises 469 residues: Transcription factor phomD' (469 aa).

Positions 14–41 form a DNA-binding region, zn(2)-C6 fungal-type; it reads CNACNESKVRCSQRKPTCARCERNGVEC. A disordered region spans residues 49–118; that stretch reads THKDAPPISM…QQKDEAAAAA (70 aa). A compositionally biased stretch (polar residues) spans 82–93; sequence KANSNSSSNWHM. A compositionally biased stretch (low complexity) spans 104–118; that stretch reads QQQQQQQKDEAAAAA.

It is found in the nucleus. Transcription factor; part of the gene cluster that mediates the biosynthesis of the phomopsins, a group of hexapeptide mycotoxins which infects lupins and causes lupinosis disease in livestock. May play a role in the regulation of the production of phomopsins. In Diaporthe leptostromiformis (Lupinosis disease fungus), this protein is Transcription factor phomD'.